We begin with the raw amino-acid sequence, 551 residues long: Cytochrome c oxidase subunit 1 (551 aa).

A helical membrane pass occupies residues 34 to 54 (TLYLYSGVWGGLFGASLSLMI). Gly62 contributes to the Ca(2+) binding site. Residue His79 coordinates Fe(II)-heme a. Helical transmembrane passes span 81-101 (LMMIFFAVMPILIEAFGNWLI), 126-146 (ALYLLMLSFSTDKGVGAGWTI), 163-183 (VLIVSLHLAGLSSLVGAINFA), 209-229 (TAVLLIISIPVLGGGITMILF), 252-272 (LFWFFGHPEVYILILPAFGVM), and 285-305 (VFGLIGMVYAMIGIGGLGCMV). A Cu cation-binding site is contributed by His258. Residues 258-262 (HPEVY) constitute a cross-link (1'-histidyl-3'-tyrosine (His-Tyr)). Tyr262 lines the O2 pocket. Residues His308 and His309 each contribute to the Cu cation site. Helical transmembrane passes span 326 to 346 (ATMVIAVPTGVKVFSWLATMA) and 356 to 376 (AYWSTGFLFLFTVGGLTGVLL). Residues His386 and Asp387 each contribute to the Mg(2+) site. 3 consecutive transmembrane segments (helical) span residues 391–411 (VVAHFHYVLSMGAVFGVFCGL), 432–452 (FMAMFFGVNTTFFPQHFLGLS), and 475–495 (GSAVSFGSLMYFKFLLWEALV). His394 lines the heme a3 pocket. His396 contributes to the Fe(II)-heme a binding site.

Belongs to the heme-copper respiratory oxidase family. As to quaternary structure, component of the cytochrome c oxidase (complex IV, CIV), a multisubunit enzyme composed of a catalytic core of 3 subunits and several supernumerary subunits. The complex exists as a monomer or a dimer and forms supercomplexes (SCs) in the inner mitochondrial membrane with ubiquinol-cytochrome c oxidoreductase (cytochrome b-c1 complex, complex III, CIII). Requires heme as cofactor. The cofactor is Cu cation.

It localises to the mitochondrion inner membrane. The catalysed reaction is 4 Fe(II)-[cytochrome c] + O2 + 8 H(+)(in) = 4 Fe(III)-[cytochrome c] + 2 H2O + 4 H(+)(out). It functions in the pathway energy metabolism; oxidative phosphorylation. Functionally, component of the cytochrome c oxidase, the last enzyme in the mitochondrial electron transport chain which drives oxidative phosphorylation. The respiratory chain contains 3 multisubunit complexes succinate dehydrogenase (complex II, CII), ubiquinol-cytochrome c oxidoreductase (cytochrome b-c1 complex, complex III, CIII) and cytochrome c oxidase (complex IV, CIV), that cooperate to transfer electrons derived from NADH and succinate to molecular oxygen, creating an electrochemical gradient over the inner membrane that drives transmembrane transport and the ATP synthase. Cytochrome c oxidase is the component of the respiratory chain that catalyzes the reduction of oxygen to water. Electrons originating from reduced cytochrome c in the intermembrane space (IMS) are transferred via the dinuclear copper A center (CU(A)) of subunit 2 and heme A of subunit 1 to the active site in subunit 1, a binuclear center (BNC) formed by heme A3 and copper B (CU(B)). The BNC reduces molecular oxygen to 2 water molecules using 4 electrons from cytochrome c in the IMS and 4 protons from the mitochondrial matrix. In Mytilus edulis (Blue mussel), this protein is Cytochrome c oxidase subunit 1 (COI).